A 471-amino-acid polypeptide reads, in one-letter code: UDP-N-acetylmuramate--L-alanine ligase (471 aa).

114-120 (GTHGKTT) contacts ATP.

The protein belongs to the MurCDEF family.

Its subcellular location is the cytoplasm. It catalyses the reaction UDP-N-acetyl-alpha-D-muramate + L-alanine + ATP = UDP-N-acetyl-alpha-D-muramoyl-L-alanine + ADP + phosphate + H(+). It participates in cell wall biogenesis; peptidoglycan biosynthesis. Cell wall formation. This is UDP-N-acetylmuramate--L-alanine ligase from Sinorhizobium medicae (strain WSM419) (Ensifer medicae).